The following is a 347-amino-acid chain: Dihydroorotase (347 aa).

Residues histidine 17 and histidine 19 each contribute to the Zn(2+) site. Substrate-binding positions include 19-21 and asparagine 45; that span reads HLR. Residues lysine 103, histidine 140, and histidine 178 each contribute to the Zn(2+) site. Lysine 103 is modified (N6-carboxylysine). Substrate is bound at residue histidine 140. Leucine 223 is a substrate binding site. Aspartate 251 is a binding site for Zn(2+). Aspartate 251 is an active-site residue. Substrate-binding residues include histidine 255 and alanine 267.

This sequence belongs to the metallo-dependent hydrolases superfamily. DHOase family. Class II DHOase subfamily. Homodimer. Zn(2+) is required as a cofactor.

It catalyses the reaction (S)-dihydroorotate + H2O = N-carbamoyl-L-aspartate + H(+). It participates in pyrimidine metabolism; UMP biosynthesis via de novo pathway; (S)-dihydroorotate from bicarbonate: step 3/3. Its function is as follows. Catalyzes the reversible cyclization of carbamoyl aspartate to dihydroorotate. The polypeptide is Dihydroorotase (Citrobacter koseri (strain ATCC BAA-895 / CDC 4225-83 / SGSC4696)).